We begin with the raw amino-acid sequence, 635 residues long: Probable retaining alpha-galactosidase (635 aa).

A signal peptide spans 1-30 (MARSVRRTTLALLLSAVLAMTLFVTAPAHA). Asp179 serves as a coordination point for Ca(2+). The Nucleophile role is filled by Asp397. Glu446 and Glu452 together coordinate Ca(2+). Catalysis depends on Glu452, which acts as the Proton donor/acceptor.

Belongs to the glycosyl hydrolase 97 family. The cofactor is Ca(2+).

The enzyme catalyses Hydrolysis of terminal, non-reducing alpha-D-galactose residues in alpha-D-galactosides, including galactose oligosaccharides, galactomannans and galactolipids.. This chain is Probable retaining alpha-galactosidase, found in Streptomyces bingchenggensis (strain BCW-1).